The primary structure comprises 612 residues: MCGIVGIVSQRNILKFLLTGLNHLEYRGYDSSGLAVIDNNNKLRCIKKVGKVNVLEKAILNKKMSFLGKTGVAHTRWATHGPPTENNAHPHISGNIAVVHNGIIENHEHLRSKLKSYKYKFNSDTDTEVIAHLIHWEQNKNGGSLTEVVKRVSRMLFGIYSTVVMDSNNPNILIAECFGSPLIIGLGICENSIASDQLALLNLSKNFIFLKNGDIAEITNSKIRIWDKFNNKINRDTVQTKISLDINKKGNFKHFLKKEIFEQPKAIKNTLKNRIKKNYIYLSELSGKFNKTIKYIKHIKLVACGSSYNSAMVSKYWFEKFAGLSCNIEIASEFCYRKIVICKNSLLIFLSQSGETADILSALRLIKKFNYVFSISICNTPESSLIRESEISILTHAGVEISVASTKTFTTQLTALLMLISHICYIRKINEKSQTDIFNAIQILPNRIEQMLLVKNSVKKLVKNFSNKKNVIIIGRGELYPIAIEAALKLKETSYIHAEGYAAGELKHGTLALIDTNTPVIVLVCKNKLLRKTLSNIEEIKSRGGQIYIFSEKSIFFSKSSNVNITKLPFVEELLVPMAYIVPMQLLSYYIGIEKNVDVDHPRNLAKTVTVE.

Cys-2 (nucleophile; for GATase activity) is an active-site residue. The region spanning 2 to 221 (CGIVGIVSQR…NGDIAEITNS (220 aa)) is the Glutamine amidotransferase type-2 domain. SIS domains follow at residues 289–429 (FNKT…IRKI) and 461–602 (LVKN…VDHP). Lys-607 acts as the For Fru-6P isomerization activity in catalysis.

In terms of assembly, homodimer.

It localises to the cytoplasm. The catalysed reaction is D-fructose 6-phosphate + L-glutamine = D-glucosamine 6-phosphate + L-glutamate. Its function is as follows. Catalyzes the first step in hexosamine metabolism, converting fructose-6P into glucosamine-6P using glutamine as a nitrogen source. In Wigglesworthia glossinidia brevipalpis, this protein is Glutamine--fructose-6-phosphate aminotransferase [isomerizing].